The sequence spans 453 residues: UDP-glycosyltransferase 79B6 (453 aa).

UDP-alpha-D-glucose-binding positions include S266, 325-327, 342-350, and 364-367; these read VQQ, HCGFGSMWE, and LGEQ.

The protein belongs to the UDP-glycosyltransferase family.

This Arabidopsis thaliana (Mouse-ear cress) protein is UDP-glycosyltransferase 79B6 (UGT79B6).